Consider the following 332-residue polypeptide: Glycerol-3-phosphate dehydrogenase [NAD(P)+] (332 aa).

Ser-10, Trp-11, His-31, Arg-32, and Lys-105 together coordinate NADPH. Sn-glycerol 3-phosphate is bound by residues Lys-105, Gly-136, and Ser-138. Residue Ala-140 coordinates NADPH. Sn-glycerol 3-phosphate contacts are provided by Lys-191, Asp-244, Ser-254, Arg-255, and Asn-256. Lys-191 functions as the Proton acceptor in the catalytic mechanism. Arg-255 contacts NADPH. Val-279 and Glu-281 together coordinate NADPH.

It belongs to the NAD-dependent glycerol-3-phosphate dehydrogenase family.

The protein resides in the cytoplasm. The enzyme catalyses sn-glycerol 3-phosphate + NAD(+) = dihydroxyacetone phosphate + NADH + H(+). It catalyses the reaction sn-glycerol 3-phosphate + NADP(+) = dihydroxyacetone phosphate + NADPH + H(+). The protein operates within membrane lipid metabolism; glycerophospholipid metabolism. Its function is as follows. Catalyzes the reduction of the glycolytic intermediate dihydroxyacetone phosphate (DHAP) to sn-glycerol 3-phosphate (G3P), the key precursor for phospholipid synthesis. This chain is Glycerol-3-phosphate dehydrogenase [NAD(P)+], found in Prosthecochloris aestuarii (strain DSM 271 / SK 413).